We begin with the raw amino-acid sequence, 407 residues long: Aspartokinase (407 aa).

An ATP-binding site is contributed by 7–10 (KFGG). 25–30 (RVIEEV) is a binding site for substrate. Ser-41 contacts ATP. Residues 47 to 49 (TDE), Glu-74, 125 to 126 (LD), 150 to 153 (RGGS), and Ser-153 contribute to the substrate site. Residues 173–174 (TD) and 179–184 (FTTDPR) each bind ATP. ACT domains are found at residues 264–338 (VTVV…LAKV) and 340–407 (IVGS…AVRS). Substrate contacts are provided by residues 289-291 (NVD), Gln-295, 351-352 (VA), 365-366 (EI), and 372-373 (SE).

The protein belongs to the aspartokinase family. Tetramer consisting of 2 isoforms Alpha (catalytic and regulation) and of a homodimer of 2 isoforms Beta (regulation).

It carries out the reaction L-aspartate + ATP = 4-phospho-L-aspartate + ADP. Its pathway is amino-acid biosynthesis; L-lysine biosynthesis via DAP pathway; (S)-tetrahydrodipicolinate from L-aspartate: step 1/4. The protein operates within amino-acid biosynthesis; L-methionine biosynthesis via de novo pathway; L-homoserine from L-aspartate: step 1/3. It functions in the pathway amino-acid biosynthesis; L-threonine biosynthesis; L-threonine from L-aspartate: step 1/5. Lysine-sensitive. In terms of biological role, catalyzes the phosphorylation of the beta-carboxyl group of aspartic acid with ATP to yield 4-phospho-L-aspartate, which is involved in the branched biosynthetic pathway leading to the biosynthesis of amino acids threonine, isoleucine and methionine. This Geobacillus stearothermophilus (Bacillus stearothermophilus) protein is Aspartokinase (lysC).